Here is a 319-residue protein sequence, read N- to C-terminus: Succinoglycan biosynthesis protein ExoW (319 aa).

Belongs to the glycosyltransferase 2 family.

It is found in the cell membrane. The protein operates within glycan metabolism; exopolysaccharide biosynthesis. In terms of biological role, glycosyltransferase required for the synthesis of succinoglycan (EPS I). Needed for the addition of the seventh sugar (glucose), catalyzes the formation of a beta-1,3 linkage between the seventh and eighth sugar. This is Succinoglycan biosynthesis protein ExoW (exoW) from Rhizobium meliloti (strain 1021) (Ensifer meliloti).